The chain runs to 158 residues: 2-C-methyl-D-erythritol 2,4-cyclodiphosphate synthase (158 aa).

Asp9 and His11 together coordinate a divalent metal cation. 4-CDP-2-C-methyl-D-erythritol 2-phosphate-binding positions include 9–11 (DVH) and 35–36 (HS). An a divalent metal cation-binding site is contributed by His43. Residues 57–59 (DIG), 62–66 (FPDTD), 101–107 (AQAPKMA), 133–136 (TTTE), Phe140, and Arg143 contribute to the 4-CDP-2-C-methyl-D-erythritol 2-phosphate site.

Belongs to the IspF family. As to quaternary structure, homotrimer. It depends on a divalent metal cation as a cofactor.

The enzyme catalyses 4-CDP-2-C-methyl-D-erythritol 2-phosphate = 2-C-methyl-D-erythritol 2,4-cyclic diphosphate + CMP. It participates in isoprenoid biosynthesis; isopentenyl diphosphate biosynthesis via DXP pathway; isopentenyl diphosphate from 1-deoxy-D-xylulose 5-phosphate: step 4/6. Its function is as follows. Involved in the biosynthesis of isopentenyl diphosphate (IPP) and dimethylallyl diphosphate (DMAPP), two major building blocks of isoprenoid compounds. Catalyzes the conversion of 4-diphosphocytidyl-2-C-methyl-D-erythritol 2-phosphate (CDP-ME2P) to 2-C-methyl-D-erythritol 2,4-cyclodiphosphate (ME-CPP) with a corresponding release of cytidine 5-monophosphate (CMP). This is 2-C-methyl-D-erythritol 2,4-cyclodiphosphate synthase from Vibrio campbellii (strain ATCC BAA-1116).